The primary structure comprises 213 residues: Ribosomal RNA large subunit methyltransferase E (213 aa).

S-adenosyl-L-methionine is bound by residues glycine 60, tryptophan 62, aspartate 80, aspartate 96, and aspartate 121. The active-site Proton acceptor is the lysine 161.

It belongs to the class I-like SAM-binding methyltransferase superfamily. RNA methyltransferase RlmE family.

It localises to the cytoplasm. The catalysed reaction is uridine(2552) in 23S rRNA + S-adenosyl-L-methionine = 2'-O-methyluridine(2552) in 23S rRNA + S-adenosyl-L-homocysteine + H(+). In terms of biological role, specifically methylates the uridine in position 2552 of 23S rRNA at the 2'-O position of the ribose in the fully assembled 50S ribosomal subunit. This chain is Ribosomal RNA large subunit methyltransferase E, found in Xylella fastidiosa (strain M23).